The chain runs to 31 residues: Cytochrome b6-f complex subunit 6 (31 aa).

The chain crosses the membrane as a helical span at residues 3 to 23; that stretch reads IAIDYFLLVGFCFAFTSGLYL.

The protein belongs to the PetL family. As to quaternary structure, the 4 large subunits of the cytochrome b6-f complex are cytochrome b6, subunit IV (17 kDa polypeptide, PetD), cytochrome f and the Rieske protein, while the 4 small subunits are PetG, PetL, PetM and PetN. The complex functions as a dimer.

The protein localises to the plastid. It localises to the chloroplast thylakoid membrane. Functionally, component of the cytochrome b6-f complex, which mediates electron transfer between photosystem II (PSII) and photosystem I (PSI), cyclic electron flow around PSI, and state transitions. PetL is important for photoautotrophic growth as well as for electron transfer efficiency and stability of the cytochrome b6-f complex. This Trieres chinensis (Marine centric diatom) protein is Cytochrome b6-f complex subunit 6.